The sequence spans 1168 residues: ATP-dependent DNA helicase mph1 (1168 aa).

Composition is skewed to polar residues over residues 24 to 38 and 59 to 68; these read NITS…QLAS and PTVSQGQATA. The tract at residues 24 to 132 is disordered; that stretch reads NITSHHPSNS…PFRADMPPEQ (109 aa). The span at 71–88 shows a compositional bias: low complexity; the sequence is RAKTASKPTTSATTSRPS. Polar residues predominate over residues 89 to 104; that stretch reads LAQSSQRKNLRQTTLW. The 169-residue stretch at 162-330 folds into the Helicase ATP-binding domain; the sequence is IVKNGLFNNT…DVIDNLGISH (169 aa). 175–182 provides a ligand contact to ATP; the sequence is LPTGLGKT. The short motif at 278-281 is the DEAH box element; that stretch reads DEAH. Residues 506 to 665 enclose the Helicase C-terminal domain; the sequence is LVNHFMDAGE…GSRFTFRHDL (160 aa). Disordered stretches follow at residues 690 to 717 and 830 to 1168; these read SQNP…FNMP and APAN…DDQE. Over residues 701–714 the composition is skewed to basic residues; it reads SAARMRTKPAKKKF. Positions 895 to 907 are enriched in polar residues; it reads TAKTKSTGVSKQT. Acidic residues predominate over residues 920 to 936; sequence DCEEGGNEYDGNVDDDE. Positions 941–959 are enriched in basic residues; the sequence is RNFRSKGRGRGSGRGKKSQ. Positions 985 to 996 are enriched in acidic residues; that stretch reads GSDDGADLEDFI. Residues 1001–1030 are compositionally biased toward polar residues; the sequence is EVTSSLQHRPRGSTSPTTAPDAGSSSLSSK.

It belongs to the DEAD box helicase family. DEAH subfamily. FANCM sub-subfamily. Interacts with the MHF histone-fold complex to form the FANCM-MHF complex.

The protein localises to the nucleus. The enzyme catalyses ATP + H2O = ADP + phosphate + H(+). Functionally, ATP-dependent DNA helicase involved in DNA damage repair by homologous recombination and in genome maintenance. Capable of unwinding D-loops. Plays a role in limiting crossover recombinants during mitotic DNA double-strand break (DSB) repair. Component of a FANCM-MHF complex which promotes gene conversion at blocked replication forks, probably by reversal of the stalled fork. This Neurospora crassa (strain ATCC 24698 / 74-OR23-1A / CBS 708.71 / DSM 1257 / FGSC 987) protein is ATP-dependent DNA helicase mph1.